The chain runs to 85 residues: MAQKKGGGSTRNGRDSKPKMLGVKAFGGELISAGSIIVRQRGTQFHPGVNVGVGKDHTLFALVDGHVSFGVKGALNKHMVNVTPA.

This sequence belongs to the bacterial ribosomal protein bL27 family.

This chain is Large ribosomal subunit protein bL27, found in Variovorax paradoxus (strain S110).